The sequence spans 910 residues: DNA mismatch repair protein MutS (910 aa).

The segment covering 1–11 has biased composition (basic and acidic residues); sequence MEAKVEEKEPE. The disordered stretch occupies residues 1–21; sequence MEAKVEEKEPEPVENAGPDAP. Position 658–665 (658–665) interacts with ATP; it reads GPNMGGKS.

It belongs to the DNA mismatch repair MutS family.

Functionally, this protein is involved in the repair of mismatches in DNA. It is possible that it carries out the mismatch recognition step. This protein has a weak ATPase activity. This is DNA mismatch repair protein MutS from Brucella canis (strain ATCC 23365 / NCTC 10854 / RM-666).